The following is a 477-amino-acid chain: Proton-coupled amino acid transporter 3 (477 aa).

Residues 1 to 13 show a composition bias toward basic and acidic residues; it reads MGKTPLLREDGRC. Residues 1 to 42 are disordered; it reads MGKTPLLREDGRCQRNTFGGSKASSKGSSSSSSNNTVSSKKK. Topologically, residues 1–54 are cytoplasmic; it reads MGKTPLLREDGRCQRNTFGGSKASSKGSSSSSSNNTVSSKKKPRRKADALMFIQ. Residues 19-38 show a composition bias toward low complexity; that stretch reads GGSKASSKGSSSSSSNNTVS. A helical transmembrane segment spans residues 55–75; it reads IFIHLLKSNIGTGFLGLPLAV. Residues 76–77 are Extracellular-facing; the sequence is KN. Residues 78-98 traverse the membrane as a helical segment; sequence AGLLVGPVSLLAIGALTVHCM. The Cytoplasmic segment spans residues 99 to 144; it reads DILLNCACHLTSRLQRSFVNYEETTMYSLETCPSPWLRTHSVWGRY. The chain crosses the membrane as a helical span at residues 145-165; sequence VVSFLLIVTQLGFCSVYFMFM. Over 166-202 the chain is Extracellular; that stretch reads ADNLQQIVEEAHFTSNVCQPRQSLVMTSILDTRFYML. The helical transmembrane segment at 203–223 threads the bilayer; sequence TILPFLILLVLVQNPQVLSIF. The Cytoplasmic portion of the chain corresponds to 224–225; the sequence is ST. A helical transmembrane segment spans residues 226–246; that stretch reads LATITTLSSLALIFEYLIQIP. The Extracellular portion of the chain corresponds to 247–259; the sequence is HHSHLPLVASWKT. The helical transmembrane segment at 260 to 280 threads the bilayer; the sequence is FLLFFGTAIFTFEGVGMVLPL. The Cytoplasmic segment spans residues 281–291; it reads KSQMKSPQQFP. A helical transmembrane segment spans residues 292–312; it reads AVLYLGMSFVIFLYICLGTLG. Over 313–344 the chain is Extracellular; it reads YMKFGADTQASITLNLPNCWLYQSVKLMYSVG. The chain crosses the membrane as a helical span at residues 345–365; that stretch reads IFFTYALQFHVPAEIIVPYVV. Residues 366–374 are Cytoplasmic-facing; it reads SRASENWAL. Residues 375–395 traverse the membrane as a helical segment; it reads FIDLTVRAALVCLTCFSAVLI. The Extracellular segment spans residues 396-399; sequence PRLD. The chain crosses the membrane as a helical span at residues 400 to 420; the sequence is LVISLVGSVSSSALALIIPPL. Residues 421-439 lie on the Cytoplasmic side of the membrane; sequence LEIATFYSENISCTTIAKD. The helical transmembrane segment at 440–460 threads the bilayer; it reads IMISILGLLGCVLGTYQALYE. The Extracellular segment spans residues 461–477; that stretch reads MTQQSRFPMLNSTNVHT.

It belongs to the amino acid/polyamine transporter 2 family.

The protein resides in the membrane. The protein is Proton-coupled amino acid transporter 3 (Slc36a3) of Rattus norvegicus (Rat).